The following is a 304-amino-acid chain: CD-NTase-associated protein 6 (304 aa).

75–80 (GTGKTS) provides a ligand contact to ATP.

The protein belongs to the AAA ATPase family. Oligomerizes. Homohexamer. Forms a 1:1:6 CdnD:Cap7:Cap6 complex.

Functionally, regulates complex assembly in a CBASS antivirus system. CBASS (cyclic oligonucleotide-based antiphage signaling system) provides immunity against bacteriophage. The CD-NTase protein synthesizes cyclic nucleotides in response to infection; these serve as specific second messenger signals. The signals activate a diverse range of effectors, leading to bacterial cell death and thus abortive phage infection. A type III-C(AAA) CBASS system. Prevents the CdnD:Cap7:Cap8 complex (also called CdnD:HORMA2:HORMA3) from synthesizing 2',3',3'-cyclic AMP-AMP-AMP (cAAA). Binds and disassembles an active CdnD:Cap7:Cap8 complex, inhibiting the complex's ability to synthesize cyclic nucleotide second messengers. An AAA+-ATPase remodeler, in the absence of foreign threat Cap6 probably maintains the Cap7 protein in an open, inactive state. Once activated (presumably by a bacteriophage protein) Cap7 binds to and activates its cognate CD-NTase (CdnD in this bacteria) to synthesize cAAA, a cyclic nucleotide second messenger. cAAA activates the NucC endonuclease which degrades all DNA in the infected cell, causing cell death and abortive phage infection. This chain is CD-NTase-associated protein 6, found in Pseudomonas aeruginosa.